The chain runs to 939 residues: Dynamin-like GTPase MGM1, mitochondrial (939 aa).

The N-terminal 27 residues, 1 to 27, are a transit peptide targeting the mitochondrion; sequence MSAQLRAAAAITPAARRVISGPAAVRR. Residues 85–103 traverse the membrane as a helical segment; it reads FIRVPALFGGMMLGAVGWV. Residues 170–183 show a composition bias toward gly residues; sequence AGEGSGSGEGGPNG. The segment at 170 to 196 is disordered; sequence AGEGSGSGEGGPNGGPEPPRQSRAGAA. One can recognise a Dynamin-type G domain in the interval 249–522; that stretch reads TVTLPSIVVI…LEQQMSSKLN (274 aa). Residues 259–266 are G1 motif; it reads GSQSSGKS. Positions 262, 264, 265, 266, 267, and 281 each coordinate GTP. A Mg(2+)-binding site is contributed by S266. The G2 motif stretch occupies residues 285-287; that stretch reads ITR. Residues T286 and D359 each contribute to the Mg(2+) site. The tract at residues 359–362 is G3 motif; sequence DLPG. The segment at 427–430 is G4 motif; that stretch reads TKMD. GTP contacts are provided by K428, D430, and S457. Positions 456-459 are G5 motif; that stretch reads ISKL. Positions 549 to 703 are stalk region; the sequence is SAESYLAASL…TSDGIEISLK (155 aa). The segment at 710–809 is paddle region; it reads DIQPNEWAQG…LSLRIQAAKS (100 aa). Residues 810-877 form a stalk region region; that stretch reads RQCKTLTNKY…GGGLEKFARE (68 aa). A disulfide bridge connects residues C812 and C821. The 95-residue stretch at 815–909 folds into the GED domain; that stretch reads LTNKYYCPEV…KIEELHRISS (95 aa).

Belongs to the TRAFAC class dynamin-like GTPase superfamily. Dynamin/Fzo/YdjA family. As to quaternary structure, oligomeric complex consisting of membrane-bound and soluble forms of MGM1. Cleavage of the transit peptide by mitochondrial processing protease (MPP) produces a long integral membrane form of MGM1 (L-MGM1). Further processing by the rhomboid protease PCP1 produces a short peripheral membrane form of MGM1 (S-MGM1). Both forms are required for full activity.

It is found in the mitochondrion inner membrane. The protein localises to the mitochondrion intermembrane space. The catalysed reaction is GTP + H2O = GDP + phosphate + H(+). Its function is as follows. Dynamin-related GTPase that is essential for normal mitochondrial morphology by mediating fusion of the mitochondrial inner membranes, regulating cristae morphology and maintaining respiratory chain function. Exists in two forms: the transmembrane, long form (Dynamin-like GTPase MGM1, long form; L-MGM1), which is tethered to the inner mitochondrial membrane, and the short soluble form (Dynamin-like GTPase MGM1, short form; S-MGM1), which results from proteolytic cleavage and localizes in the intermembrane space. Both forms (L-MGM1 and S-MGM1) cooperate to catalyze the fusion of the mitochondrial inner membrane. The equilibrium between L-MGM1 and S-MGM1 is essential: excess levels of S-MGM1, following loss of mitochondrial membrane potential, lead to an impaired equilibrium between L-MGM1 and S-MGM1, inhibiting mitochondrial fusion. Plays a role in the maintenance and remodeling of mitochondrial cristae, some invaginations of the mitochondrial inner membrane that provide an increase in the surface area. Probably acts by forming helical filaments at the inside of inner membrane tubes with the shape and dimensions of crista junctions. Constitutes the transmembrane long form (L-MGM1) that plays a central role in mitochondrial inner membrane fusion and cristae morphology. L-MGM1 and the soluble short form (S-MGM1) form higher-order helical assemblies that coordinate the fusion of mitochondrial inner membranes. Inner membrane-anchored L-MGM1 molecules initiate membrane remodeling by recruiting soluble S-MGM1 to rapidly polymerize into a flexible cylindrical scaffold encaging the mitochondrial inner membrane. Once at the membrane surface, the formation of S-MGM1 helices induce bilayer curvature. MGM1 dimerization through the paddle region, which inserts into cardiolipin-containing membrane, promotes GTP hydrolysis and the helical assembly of a flexible MGM1 lattice on the membrane, which drives membrane curvature and mitochondrial fusion. Functionally, constitutes the soluble short form (S-MGM1) generated by cleavage by PCP1, which plays a central role in mitochondrial inner membrane fusion and cristae morphology. The transmembrane long form (L-MGM1) and the S-MGM1 form higher-order helical assemblies that coordinate the fusion of mitochondrial inner membranes. Inner membrane-anchored L-MGM1 molecules initiate membrane remodeling by recruiting soluble S-MGM1 to rapidly polymerize into a flexible cylindrical scaffold encaging the mitochondrial inner membrane. Once at the membrane surface, the formation of S-MGM1 helices induce bilayer curvature. MGM1 dimerization through the paddle region, which inserts into cardiolipin-containing membrane, promotes GTP hydrolysis and the helical assembly of a flexible MGM1 lattice on the membrane, which drives membrane curvature and mitochondrial fusion. Excess levels of S-MGM1 produced by cleavage by PCP1 following stress conditions that induce loss of mitochondrial membrane potential, lead to an impaired equilibrium between L-MGM1 and S-MGM1, thereby inhibiting mitochondrial fusion. The polypeptide is Dynamin-like GTPase MGM1, mitochondrial (Chaetomium thermophilum (strain DSM 1495 / CBS 144.50 / IMI 039719) (Thermochaetoides thermophila)).